Here is a 774-residue protein sequence, read N- to C-terminus: MMQRPFRPEEYSLKETSPHLGGGAAGDKLTTTYDLVEQMQYLYVRVVKAKDLPSKDITGSCDPYVEVKLGNYKGTTRHFEKKTNPEWNQVFAFSKERIQSSVVEIIVKDKDFVKDDFIGRVLFDLNEVPKRVPPDSPLAPQWYRLEERNGHKVKGELMLAVWMGTQADEAFPEAWHSDAASIPGDGLASIRSKVYLTPKLWYLRVNVIEAQDLIPNDRTRFPDVYVKAMLGNQALRTRVSPSRTLNPMWNEDLMFVAAEPFEEHLILSVEDRIAPGKDDVLGRTIISLQHVPRRLDHKLLNSQWYNLEKHVIVDGEQKKETKFSSRIHLRICLEGGYHVLDESTHYSSDLRPTAKQLWKHSIGILELGILTAQGLLPMKTKDGRGTTDAYCVAKYGQKWVRTRTIIDSFTPKWNEQYTWEVYDPCTVITIGVFDNCHLNGGEKANGARDTRIGKVRIRLSTLETDRVYTHAYPLIVLTPAGVKKMGEVQLAVRFTCSSLLNMMHLYSQPLLPKMHYVHPLSVMQVDNLRRQATNIVSTRLSRAEPPLRKEIVEYMLDVDSHMWSMRKSKANFFRIMGVLSPLIAVAKWFDQICHWRNPLTTILIHILFVILVLYPELILPTIFLYLFLIGVWYYRWRPRQPPHMDTRLSHAESAHPDELDEEFDTFPTSRPPDIVRMRYDRLRSVAGRIQTVVGDLATQGERLQSLLSWRDPRATALFVTFCFVAAIVLYVTPFRVVVFLAGLYTLRHPRFRHKMPSVPLNFFRRLPARTDSML.

Residues 1–17 (MMQRPFRPEEYSLKETS) are compositionally biased toward basic and acidic residues. Residues 1-25 (MMQRPFRPEEYSLKETSPHLGGGAA) form a disordered region. 3 C2 domains span residues 23-143 (GAAG…PQWY), 182-305 (IPGD…SQWY), and 346-472 (YSSD…THAY). Aspartate 56, aspartate 62, aspartate 109, aspartate 111, and aspartate 116 together coordinate Ca(2+). The next 3 helical transmembrane spans lie at 575–595 (IMGVLSPLIAVAKWFDQICHW), 606–626 (ILFVILVLYPELILPTIFLYL), and 714–734 (ATALFVTFCFVAAIVLYVTPF).

Belongs to the MCTP family. Interacts with OSH1. It depends on Ca(2+) as a cofactor. In terms of tissue distribution, expressed in roots, stems, lemma, palea, pistils and ovules. Expressed at low levels in leaves.

It localises to the cell membrane. In terms of biological role, promotes nuclear translocation of the transcription factor OSH1, which directly suppresses the auxin biosynthetic gene YUCCA4 during the late development of anthers. Reduction of auxin levels at late stage of anther development, after meiosis of microspore mother cells, is necessary for normal anther dehiscence and seed setting. Required for jasmonate (JA) biosynthetic genes expression and JA production in anthers. In Oryza sativa subsp. japonica (Rice), this protein is FT-interacting protein 7.